The sequence spans 26 residues: Toxin b subunit alpha (26 aa).

As to quaternary structure, toxin b is a heterodimer composed of toxin alpha and toxin beta. As to expression, expressed by the venom gland.

The protein resides in the secreted. Binds to sodium channels (Nav) and affects the channel activation process. The polypeptide is Toxin b subunit alpha (Androctonus crassicauda (Arabian fat-tailed scorpion)).